The sequence spans 394 residues: 1-acylglycerol-3-phosphate O-acyltransferase ICT1 (394 aa).

The AB hydrolase-1 domain occupies valine 74 to proline 381. The short motif at histidine 374 to aspartate 379 is the HXXXXD motif element.

The protein belongs to the peptidase S33 family. ABHD4/ABHD5 subfamily.

The catalysed reaction is a 1-acyl-sn-glycero-3-phosphate + an acyl-CoA = a 1,2-diacyl-sn-glycero-3-phosphate + CoA. In terms of biological role, lysophosphatidic acid acyltransferase involved in membrane remodeling leading to increased organic solvent tolerance. Involved in resistance to azoles and copper. The chain is 1-acylglycerol-3-phosphate O-acyltransferase ICT1 (ICT1) from Saccharomyces cerevisiae (strain ATCC 204508 / S288c) (Baker's yeast).